The following is a 130-amino-acid chain: Large ribosomal subunit protein bL12 (130 aa).

The protein belongs to the bacterial ribosomal protein bL12 family. As to quaternary structure, homodimer. Part of the ribosomal stalk of the 50S ribosomal subunit. Forms a multimeric L10(L12)X complex, where L10 forms an elongated spine to which 2 to 4 L12 dimers bind in a sequential fashion. Binds GTP-bound translation factors.

Forms part of the ribosomal stalk which helps the ribosome interact with GTP-bound translation factors. Is thus essential for accurate translation. The polypeptide is Large ribosomal subunit protein bL12 (Nostoc sp. (strain PCC 7120 / SAG 25.82 / UTEX 2576)).